The sequence spans 902 residues: Transcription factor E2F7 (902 aa).

Position 96 is a phosphoserine (Ser96). The DNA-binding element occupies Arg143–Gly212. Residues Glu253–Asp269 are compositionally biased toward basic and acidic residues. The tract at residues Glu253–Arg283 is disordered. A DNA-binding region spans residues Arg283–Gly368. A Phosphoserine modification is found at Ser411. Disordered regions lie at residues Ser418–Pro439, Leu589–Thr627, and Asn665–Ile690. Basic and acidic residues-rich tracts occupy residues Leu589 to Glu611 and Pro679 to Ile690. Ser832 bears the Phosphoserine mark. Residues Lys844 to Asp902 form a disordered region. Polar residues predominate over residues Ser884–Asp902.

The protein belongs to the E2F/DP family. In terms of assembly, homodimer and heterodimer: mainly forms homodimers and, to a lesser extent, heterodimers with E2F8. Dimerization is important for DNA-binding. Interacts with HIF1A. Interacts with MN1.

It is found in the nucleus. Functionally, atypical E2F transcription factor that participates in various processes such as angiogenesis, polyploidization of specialized cells and DNA damage response. Mainly acts as a transcription repressor that binds DNA independently of DP proteins and specifically recognizes the E2 recognition site 5'-TTTC[CG]CGC-3'. Directly represses transcription of classical E2F transcription factors such as E2F1. Acts as a regulator of S-phase by recognizing and binding the E2-related site 5'-TTCCCGCC-3' and mediating repression of G1/S-regulated genes. Plays a key role in polyploidization of cells in placenta and liver by regulating the endocycle, probably by repressing genes promoting cytokinesis and antagonizing action of classical E2F proteins (E2F1, E2F2 and/or E2F3). Required for placental development by promoting polyploidization of trophoblast giant cells. Also involved in DNA damage response: up-regulated by p53/TP53 following genotoxic stress and acts as a downstream effector of p53/TP53-dependent repression by mediating repression of indirect p53/TP53 target genes involved in DNA replication. Acts as a promoter of sprouting angiogenesis, possibly by acting as a transcription activator: associates with HIF1A, recognizes and binds the VEGFA promoter, which is different from canonical E2 recognition site, and activates expression of the VEGFA gene. Acts as a negative regulator of keratinocyte differentiation. The chain is Transcription factor E2F7 (E2f7) from Rattus norvegicus (Rat).